The sequence spans 513 residues: V-type proton ATPase subunit B, kidney isoform (513 aa).

Arginine 394 provides a ligand contact to ATP. The short motif at 510-513 is the PDZ-binding element; it reads DTAL.

Belongs to the ATPase alpha/beta chains family. V-ATPase is a heteromultimeric enzyme made up of two complexes: the ATP-hydrolytic V1 complex and the proton translocation V0 complex. The V1 complex consists of three catalytic AB heterodimers that form a heterohexamer, three peripheral stalks each consisting of EG heterodimers, one central rotor including subunits D and F, and the regulatory subunits C and H. The proton translocation complex V0 consists of the proton transport subunit a, a ring of proteolipid subunits c9c'', rotary subunit d, subunits e and f, and the accessory subunits ATP6AP1/Ac45 and ATP6AP2/PRR. Forms a complex with NHERF1 and SCL4A7. Kidney cortex and medulla.

The protein localises to the apical cell membrane. Its subcellular location is the basolateral cell membrane. In terms of biological role, non-catalytic subunit of the V1 complex of vacuolar(H+)-ATPase (V-ATPase), a multisubunit enzyme composed of a peripheral complex (V1) that hydrolyzes ATP and a membrane integral complex (V0) that translocates protons. V-ATPase is responsible for acidifying and maintaining the pH of intracellular compartments and in some cell types, is targeted to the plasma membrane, where it is responsible for acidifying the extracellular environment. Essential for the proper assembly and activity of V-ATPase. In renal intercalated cells, mediates secretion of protons (H+) into the urine thereby ensuring correct urinary acidification. Required for optimal olfactory function by mediating the acidification of the nasal olfactory epithelium. In Bos taurus (Bovine), this protein is V-type proton ATPase subunit B, kidney isoform (ATP6V1B1).